The following is a 448-amino-acid chain: Tubulin beta-1 chain (448 aa).

GTP-binding residues include Gln11, Glu72, Ser141, Gly145, Thr146, Gly147, Asn207, and Asn229. Glu72 is a binding site for Mg(2+). Positions 424–448 (QQYQDAGMDDDEAEEAYEEEEPVEE) are disordered. A compositionally biased stretch (acidic residues) spans 430–448 (GMDDDEAEEAYEEEEPVEE).

Belongs to the tubulin family. In terms of assembly, dimer of alpha and beta chains. A typical microtubule is a hollow water-filled tube with an outer diameter of 25 nm and an inner diameter of 15 nM. Alpha-beta heterodimers associate head-to-tail to form protofilaments running lengthwise along the microtubule wall with the beta-tubulin subunit facing the microtubule plus end conferring a structural polarity. Microtubules usually have 13 protofilaments but different protofilament numbers can be found in some organisms and specialized cells. Mg(2+) serves as cofactor.

The protein resides in the cytoplasm. It is found in the cytoskeleton. Functionally, tubulin is the major constituent of microtubules, a cylinder consisting of laterally associated linear protofilaments composed of alpha- and beta-tubulin heterodimers. Microtubules grow by the addition of GTP-tubulin dimers to the microtubule end, where a stabilizing cap forms. Below the cap, tubulin dimers are in GDP-bound state, owing to GTPase activity of alpha-tubulin. The protein is Tubulin beta-1 chain (TUB1) of Colletotrichum gloeosporioides (Anthracnose fungus).